We begin with the raw amino-acid sequence, 209 residues long: SelT-like protein (209 aa).

The signal sequence occupies residues 1–22 (MDKTQLILLGLPIFLLCSDLFN). Cys64 and Cys67 form a disulfide bridge.

This sequence belongs to the SelWTH family. SELT subfamily.

The protein is SelT-like protein of Arabidopsis thaliana (Mouse-ear cress).